The primary structure comprises 319 residues: G-protein coupled receptor 55 (319 aa).

The Extracellular portion of the chain corresponds to Met-1–Thr-21. Asn-5 is a glycosylation site (N-linked (GlcNAc...) asparagine). Residues Leu-22–Ile-42 traverse the membrane as a helical segment. Residues His-43–Ala-58 lie on the Cytoplasmic side of the membrane. Residues Thr-59–Phe-79 form a helical membrane-spanning segment. Topologically, residues Lys-80–Cys-94 are extracellular. A helical transmembrane segment spans residues Thr-95–Ile-115. Residues Ser-116–Lys-137 are Cytoplasmic-facing. A helical transmembrane segment spans residues Ile-138–Ser-158. The Extracellular portion of the chain corresponds to Phe-159–Lys-180. The N-linked (GlcNAc...) asparagine glycan is linked to Asn-171. A helical membrane pass occupies residues Val-181–Cys-201. The Cytoplasmic segment spans residues Ser-202–Ser-231. The chain crosses the membrane as a helical span at residues Leu-232–Val-252. The Extracellular segment spans residues Arg-253–Gln-271. Residues Leu-272–Ile-292 form a helical membrane-spanning segment. At Lys-293–Gly-319 the chain is on the cytoplasmic side.

The protein belongs to the G-protein coupled receptor 1 family. In terms of tissue distribution, expressed in the caudate nucleus and putamen, but not detected in the hippocampus, thalamus, pons cerebellum, frontal cortex of the brain or in the liver. Expressed in osteoclasts and osteoblasts. Higly expressed in macrophages and B-cells.

The protein localises to the cell membrane. G-protein coupled receptor that binds to several ligands including 2-arachidonoyl lysophosphatidylinositol or lysophosphatidylglucoside with high affinity, leading to rapid and transient activation of numerous intracellular signaling pathways. Induces the Ca(2+) release from intracellular stores via ERK, the heterotrimeric G protein GNA13 and RHOA leading to morphological changes including cell rounding and stress fiber formation. In macrophages, acts downstream of lysophosphatidylglucoside to inhibit the translocation of the phospholipid-transporting ABCA1 to plasma membrane and subsequent cholesterol efflux leading to lipid accumulation and foam cell formation. The polypeptide is G-protein coupled receptor 55 (GPR55) (Homo sapiens (Human)).